The chain runs to 450 residues: Signal recognition particle protein (450 aa).

GTP contacts are provided by residues 107-114 (GLQGSGKT), 190-194 (DTAGR), and 248-251 (TKTD).

Belongs to the GTP-binding SRP family. SRP54 subfamily. As to quaternary structure, part of the signal recognition particle protein translocation system, which is composed of SRP and FtsY. SRP is a ribonucleoprotein composed of Ffh and a 4.5S RNA molecule.

The protein localises to the cytoplasm. It catalyses the reaction GTP + H2O = GDP + phosphate + H(+). Involved in targeting and insertion of nascent membrane proteins into the cytoplasmic membrane. Binds to the hydrophobic signal sequence of the ribosome-nascent chain (RNC) as it emerges from the ribosomes. The SRP-RNC complex is then targeted to the cytoplasmic membrane where it interacts with the SRP receptor FtsY. Interaction with FtsY leads to the transfer of the RNC complex to the Sec translocase for insertion into the membrane, the hydrolysis of GTP by both Ffh and FtsY, and the dissociation of the SRP-FtsY complex into the individual components. The sequence is that of Signal recognition particle protein from Buchnera aphidicola subsp. Baizongia pistaciae (strain Bp).